A 262-amino-acid polypeptide reads, in one-letter code: Chondroitin proteoglycan 3 (262 aa).

A signal peptide spans 1-17 (MRSSFIFALLLIGAALA). Residues 37 to 68 (FSGEASGEASGEASGEFSGEGSGEGSGELSPE) are disordered. The segment covering 39–53 (GEASGEASGEASGEF) has biased composition (low complexity). N-linked (GlcNAc...) asparagine glycans are attached at residues Asn-140, Asn-148, and Asn-224.

In Caenorhabditis briggsae, this protein is Chondroitin proteoglycan 3 (cpg-3).